The chain runs to 377 residues: Peroxisomal membrane protein PEX14 (377 aa).

Positions 1 to 20 are enriched in low complexity; that stretch reads MASSEQAEQPSQPSSSPGSE. Residues 1–23 form a disordered region; the sequence is MASSEQAEQPSQPSSSPGSENVV. An N-acetylalanine modification is found at A2. The Peroxisomal segment spans residues 2–108; the sequence is ASSEQAEQPS…CSPGSSRWRD (107 aa). K34 bears the N6-acetyllysine mark. A helical transmembrane segment spans residues 109-126; sequence YGALAIIMAGIAFGFHQL. Topologically, residues 127–377 are cytoplasmic; sequence YKKYLLPLIL…EGASNESERH (251 aa). Positions 230 to 377 are disordered; sequence PPSPSAPKIP…EGASNESERH (148 aa). S232 is modified (phosphoserine). Low complexity-rich tracts occupy residues 244-259 and 265-275; these read PVKS…VNHH and SPVSNESTSSS. Residues S282 and S335 each carry the phosphoserine modification. The span at 323-342 shows a compositional bias: acidic residues; it reads KEEEEEEEEEDVSHVDEEDV. Residues 360–377 show a composition bias toward basic and acidic residues; sequence QVDKLRRPEGASNESERH.

This sequence belongs to the peroxin-14 family. Interacts with PEX13; forming the PEX13-PEX14 docking complex. Interacts with PEX5 (via WxxxF/Y motifs). Interacts with PEX19. Interacts with tubulin.

The protein resides in the peroxisome membrane. Component of the PEX13-PEX14 docking complex, a translocon channel that specifically mediates the import of peroxisomal cargo proteins bound to PEX5 receptor. The PEX13-PEX14 docking complex forms a large import pore which can be opened to a diameter of about 9 nm. Mechanistically, PEX5 receptor along with cargo proteins associates with the PEX14 subunit of the PEX13-PEX14 docking complex in the cytosol, leading to the insertion of the receptor into the organelle membrane with the concomitant translocation of the cargo into the peroxisome matrix. Plays a key role for peroxisome movement through a direct interaction with tubulin. The polypeptide is Peroxisomal membrane protein PEX14 (Cricetulus longicaudatus (Long-tailed dwarf hamster)).